Reading from the N-terminus, the 34-residue chain is Photosystem II reaction center protein M (34 aa).

Residues 6 to 26 (LGAIATALFVFIPCVFLILLY) form a helical membrane-spanning segment.

It belongs to the PsbM family. In terms of assembly, PSII is composed of 1 copy each of membrane proteins PsbA, PsbB, PsbC, PsbD, PsbE, PsbF, PsbH, PsbI, PsbJ, PsbK, PsbL, PsbM, PsbT, PsbX, PsbY, PsbZ, Psb30/Ycf12, peripheral proteins PsbO, CyanoQ (PsbQ), PsbU, PsbV and a large number of cofactors. It forms dimeric complexes.

It is found in the cellular thylakoid membrane. Functionally, one of the components of the core complex of photosystem II (PSII). PSII is a light-driven water:plastoquinone oxidoreductase that uses light energy to abstract electrons from H(2)O, generating O(2) and a proton gradient subsequently used for ATP formation. It consists of a core antenna complex that captures photons, and an electron transfer chain that converts photonic excitation into a charge separation. This subunit is found at the monomer-monomer interface. The protein is Photosystem II reaction center protein M of Acaryochloris marina (strain MBIC 11017).